Here is a 250-residue protein sequence, read N- to C-terminus: Copper homeostasis protein cutC homolog (250 aa).

Belongs to the CutC family.

In terms of biological role, involved in copper homeostasis. Affects body morphology and length, egg laying and brood size. The sequence is that of Copper homeostasis protein cutC homolog (cutc-1) from Caenorhabditis elegans.